Reading from the N-terminus, the 287-residue chain is Putative sugar uptake protein EF_0928 (287 aa).

The next 10 helical transmembrane spans lie at 5-27 (IALVPMIAWGSIGLVSGKIGGSA), 32-49 (LGMTIGALLFSIVVFFVI), 53-71 (LTTATLIVGFISGLFWSLG), 84-106 (VSVGLPISTGMQLVVNTVAGAVF), 116-134 (FVVGFIALAFLVFGVYLTA), 155-177 (IRALIFSTVGYGVYTIIINATGL), 182-200 (IILPQSIGMLVGASFFAFK), 207-229 (FVWMNMTTGLLWGLGNICMLLTM), 234-256 (LAISFSLSQMGIIISTLGGIFLL), and 265-284 (MFYVIFGCIFVILGGILLGY).

The protein belongs to the GRP transporter (TC 2.A.7.5) family.

It localises to the cell membrane. The sequence is that of Putative sugar uptake protein EF_0928 from Enterococcus faecalis (strain ATCC 700802 / V583).